The primary structure comprises 157 residues: Protein Smg (157 aa).

It belongs to the Smg family.

This Pectobacterium carotovorum subsp. carotovorum (strain PC1) protein is Protein Smg.